Reading from the N-terminus, the 262-residue chain is MLVAAGQFAVTSVWEKNAEICASLMAQAAENDVSLFVLPEALLARDDHDADLSVKSAQLLEGEFLGRLRRESKRNMMTTILTIHVPSTPGRAWNMLVALQAGNIVARYAKLHLYDAFAIQESRRVDAGNEIAPLLEVEGMKVGLMTCYDLRFPELALAQALQGAEILVLPAAWVRGPLKEHHWSTLLAARALDTTCYMVAAGECGNKNIGQSRIIDPFGVTIAAASEMPALIMAEVTPERVRQVRAQLPVLNNRRFAPPQLL.

The CN hydrolase domain occupies 1–238 (MLVAAGQFAV…PALIMAEVTP (238 aa)). The Proton acceptor role is filled by Glu-40. Lys-110 acts as the Proton donor in catalysis. Cys-147 serves as the catalytic Nucleophile.

Belongs to the carbon-nitrogen hydrolase superfamily. NIT1/NIT2 family.

It carries out the reaction N-(4-oxoglutaryl)-L-cysteinylglycine + H2O = L-cysteinylglycine + 2-oxoglutarate. Functionally, hydrolyzes deaminated glutathione (dGSH) to 2-oxoglutarate and L-cysteinylglycine, and no activity on glutathione or L-glutamine. May function as a metabolite repair enzyme. This Escherichia coli O157:H7 protein is Deaminated glutathione amidase (ybeM).